The sequence spans 243 residues: 2,3-bisphosphoglycerate-dependent phosphoglycerate mutase (243 aa).

Substrate contacts are provided by residues 8–15 (RHGQSEWN), 21–22 (TG), arginine 60, 87–90 (ERHY), lysine 98, 114–115 (RR), and 183–184 (GN). The Tele-phosphohistidine intermediate role is filled by histidine 9. The active-site Proton donor/acceptor is the glutamate 87.

It belongs to the phosphoglycerate mutase family. BPG-dependent PGAM subfamily. Homodimer.

It carries out the reaction (2R)-2-phosphoglycerate = (2R)-3-phosphoglycerate. It functions in the pathway carbohydrate degradation; glycolysis; pyruvate from D-glyceraldehyde 3-phosphate: step 3/5. Functionally, catalyzes the interconversion of 2-phosphoglycerate and 3-phosphoglycerate. The polypeptide is 2,3-bisphosphoglycerate-dependent phosphoglycerate mutase (Maricaulis maris (strain MCS10) (Caulobacter maris)).